Here is a 445-residue protein sequence, read N- to C-terminus: Vacuolar fusion protein CCZ1 homolog (445 aa).

The protein belongs to the CCZ1 family.

In Dictyostelium discoideum (Social amoeba), this protein is Vacuolar fusion protein CCZ1 homolog.